Here is a 409-residue protein sequence, read N- to C-terminus: CUB domain-containing protein (409 aa).

Residues 1–18 (MFLFSLTVLSALVLITES) form the signal peptide. The segment covering 154–229 (TEASTTAQET…TTAPTTAPAP (76 aa)) has biased composition (low complexity). The tract at residues 154–230 (TEASTTAQET…TAPTTAPAPI (77 aa)) is disordered. Cysteine 232 and cysteine 257 form a disulfide bridge. One can recognise a CUB domain in the interval 232–338 (CGGVLRGRGT…QEYVDYYYYD (107 aa)). The tract at residues 389–409 (VQGAADSESEASASSESSDED) is disordered. A compositionally biased stretch (low complexity) spans 392-409 (AADSESEASASSESSDED).

In terms of tissue distribution, component of the acid-insoluble and acid-soluble organic matrix of the aragonitic skeleton (at protein level).

It localises to the secreted. The protein is CUB domain-containing protein of Acropora millepora (Staghorn coral).